The following is a 175-amino-acid chain: Zinc finger A20 and AN1 domain-containing stress-associated protein 7 (175 aa).

The A20-type zinc finger occupies 13 to 47 (PTEPKLCDNGCGFFGSPSNMNLCSKCYRSLRAEED). Zn(2+)-binding residues include Cys19, Cys23, Cys35, Cys38, Cys116, Cys119, Cys130, Cys132, Cys137, His140, His146, and Cys148. Residues 110–156 (VRPNNRCFSCNKKVGVMGFKCKCGSTFCGSHRYPEKHECSFDFKEVG) form an AN1-type zinc finger.

Functionally, may be involved in environmental stress response. The protein is Zinc finger A20 and AN1 domain-containing stress-associated protein 7 (SAP7) of Arabidopsis thaliana (Mouse-ear cress).